Reading from the N-terminus, the 181-residue chain is tRNA-splicing endonuclease (181 aa).

Catalysis depends on residues Tyr118, His126, and Lys157.

Belongs to the tRNA-intron endonuclease family. Archaeal short subfamily. In terms of assembly, homotetramer; although the tetramer contains four active sites, only two participate in the cleavage. Therefore, it should be considered as a dimer of dimers.

The enzyme catalyses pretRNA = a 3'-half-tRNA molecule with a 5'-OH end + a 5'-half-tRNA molecule with a 2',3'-cyclic phosphate end + an intron with a 2',3'-cyclic phosphate and a 5'-hydroxyl terminus.. Functionally, endonuclease that removes tRNA introns. Cleaves pre-tRNA at the 5'- and 3'-splice sites to release the intron. The products are an intron and two tRNA half-molecules bearing 2',3' cyclic phosphate and 5'-OH termini. Recognizes a pseudosymmetric substrate in which 2 bulged loops of 3 bases are separated by a stem of 4 bp. In Hyperthermus butylicus (strain DSM 5456 / JCM 9403 / PLM1-5), this protein is tRNA-splicing endonuclease.